Here is a 325-residue protein sequence, read N- to C-terminus: uncharacterized protein (325 aa).

The tract at residues 1–75 (MSQPPEHPGN…PPPGYPTHLQ (75 aa)) is disordered. Positions 24-70 (YPPPGYGAPPPPPGYGPPPGTYLPPGYNAPPPPPGYGPPPGPPPPGY) are enriched in pro residues. The next 4 membrane-spanning stretches (helical) occupy residues 96–116 (AVTLVVPVLAYAVALAAVIGA), 153–173 (IVMFLGYIALFALVLYMHAGI), 205–225 (LLIVAVTFIGGLLCVIPGLIF), and 273–293 (LVGELLCFVGMLIGIPVAALI).

It is found in the cell membrane. This is an uncharacterized protein from Mycobacterium tuberculosis (strain ATCC 25618 / H37Rv).